The following is a 123-amino-acid chain: Ribosome-binding factor A (123 aa).

Belongs to the RbfA family. As to quaternary structure, monomer. Binds 30S ribosomal subunits, but not 50S ribosomal subunits or 70S ribosomes.

It is found in the cytoplasm. Functionally, one of several proteins that assist in the late maturation steps of the functional core of the 30S ribosomal subunit. Associates with free 30S ribosomal subunits (but not with 30S subunits that are part of 70S ribosomes or polysomes). Required for efficient processing of 16S rRNA. May interact with the 5'-terminal helix region of 16S rRNA. The sequence is that of Ribosome-binding factor A from Lactobacillus johnsonii (strain CNCM I-12250 / La1 / NCC 533).